The primary structure comprises 149 residues: Large ribosomal subunit protein bL9 (149 aa).

This sequence belongs to the bacterial ribosomal protein bL9 family.

In terms of biological role, binds to the 23S rRNA. The protein is Large ribosomal subunit protein bL9 of Teredinibacter turnerae (strain ATCC 39867 / T7901).